Here is a 145-residue protein sequence, read N- to C-terminus: Large ribosomal subunit protein uL15 (145 aa).

Positions 1–55 are disordered; sequence MSLLKTLAPKAGSKHAPKRIGRGIGSGMGGTATKGHKGQLARTGGTVRRGFEGGQ. Residues 12-21 are compositionally biased toward basic residues; that stretch reads GSKHAPKRIG. Residues 22-32 show a composition bias toward gly residues; sequence RGIGSGMGGTA.

It belongs to the universal ribosomal protein uL15 family. Part of the 50S ribosomal subunit.

Functionally, binds to the 23S rRNA. This Bdellovibrio bacteriovorus (strain ATCC 15356 / DSM 50701 / NCIMB 9529 / HD100) protein is Large ribosomal subunit protein uL15.